The chain runs to 547 residues: Chaperonin GroEL (547 aa).

ATP contacts are provided by residues 30-33 (TLGP), lysine 51, 87-91 (DGTTT), glycine 414, 478-480 (NAA), and aspartate 494.

This sequence belongs to the chaperonin (HSP60) family. As to quaternary structure, forms a cylinder of 14 subunits composed of two heptameric rings stacked back-to-back. Interacts with the co-chaperonin GroES.

Its subcellular location is the cytoplasm. The enzyme catalyses ATP + H2O + a folded polypeptide = ADP + phosphate + an unfolded polypeptide.. Functionally, together with its co-chaperonin GroES, plays an essential role in assisting protein folding. The GroEL-GroES system forms a nano-cage that allows encapsulation of the non-native substrate proteins and provides a physical environment optimized to promote and accelerate protein folding. The sequence is that of Chaperonin GroEL from Klebsiella pneumoniae.